Consider the following 267-residue polypeptide: Phosphate import ATP-binding protein PstB 2 (267 aa).

In terms of domain architecture, ABC transporter spans 21 to 262 (LSTKDLHVYY…AKLQSTSDYV (242 aa)). 53–60 (GPSGCGKS) contributes to the ATP binding site.

It belongs to the ABC transporter superfamily. Phosphate importer (TC 3.A.1.7) family. In terms of assembly, the complex is composed of two ATP-binding proteins (PstB), two transmembrane proteins (PstC and PstA) and a solute-binding protein (PstS).

It is found in the cell membrane. It catalyses the reaction phosphate(out) + ATP + H2O = ADP + 2 phosphate(in) + H(+). Its function is as follows. Part of the ABC transporter complex PstSACB involved in phosphate import. Responsible for energy coupling to the transport system. This is Phosphate import ATP-binding protein PstB 2 from Streptococcus mutans serotype c (strain ATCC 700610 / UA159).